A 46-amino-acid polypeptide reads, in one-letter code: Protein PsbN (46 aa).

Residues 10–30 (VSIAVLTALLGLTGFGIYTAF) traverse the membrane as a helical segment.

It belongs to the PsbN family.

It localises to the cellular thylakoid membrane. Its function is as follows. May play a role in photosystem I and II biogenesis. In Synechococcus sp. (strain RCC307), this protein is Protein PsbN.